The chain runs to 448 residues: Mitochondrial distribution and morphology protein 10 (448 aa).

Disordered stretches follow at residues 101 to 126 (QIHPPLAPESPNESRHAEPNERSEKA) and 366 to 386 (PPLPPSPVKGTSASAVTPAGE). Positions 112–126 (NESRHAEPNERSEKA) are enriched in basic and acidic residues.

The protein belongs to the MDM10 family. In terms of assembly, component of the ER-mitochondria encounter structure (ERMES) or MDM complex, composed of MMM1, MDM10, MDM12 and MDM34. Associates with the mitochondrial outer membrane sorting assembly machinery SAM(core) complex.

The protein localises to the mitochondrion outer membrane. Component of the ERMES/MDM complex, which serves as a molecular tether to connect the endoplasmic reticulum and mitochondria. Components of this complex are involved in the control of mitochondrial shape and protein biogenesis and may function in phospholipid exchange. MDM10 is involved in the late assembly steps of the general translocase of the mitochondrial outer membrane (TOM complex). Functions in the TOM40-specific route of the assembly of outer membrane beta-barrel proteins, including the association of TOM40 with the receptor TOM22 and small TOM proteins. Can associate with the SAM(core) complex as well as the MDM12-MMM1 complex, both involved in late steps of the major beta-barrel assembly pathway, that is responsible for biogenesis of all outer membrane beta-barrel proteins. May act as a switch that shuttles between both complexes and channels precursor proteins into the TOM40-specific pathway. Plays a role in mitochondrial morphology and in the inheritance of mitochondria. The polypeptide is Mitochondrial distribution and morphology protein 10 (Coccidioides immitis (strain RS) (Valley fever fungus)).